A 116-amino-acid polypeptide reads, in one-letter code: Protein BIC2 (116 aa).

2 disordered regions span residues 1 to 33 (MKNTNLPEETKEPISPGSSHRKQNKTGTKTCFP) and 95 to 116 (DSGDDAGARGSRPQRLRVESSC).

Its subcellular location is the nucleus. In terms of biological role, regulates the blue-light dependent dimerization of CRY2 and formation of photobodies. Inhibits CRY phosphorylation. The polypeptide is Protein BIC2 (Arabidopsis thaliana (Mouse-ear cress)).